We begin with the raw amino-acid sequence, 648 residues long: MGKEPLTLKSIQVAVEELYPNKARALTLAQHSRAPSPRLRSRLFSKALKGDHRCGETETPKSCSEVAGCKAAMRHQGKIPEELSLDDRARTQKKWGRGKWEPEPSSKPPREATLEERHARGEKHLGVEIEKTSGEIIRCEKCKRERELQQSLERERLSLGTSELDMGKGPMYDVEKLVRTRSCRRSPEANPASGEEGWKGDSHRSSPRNPTQELRRPSKSMDKKEDRGPEDQESHAQGAAKAKKDLVEVLPVTEEGLREVKKDTRPMSRSKHGGWLLREHQAGFEKLRRTRGEEKEAEKEKKPCMSGGRRMTLRDDQPAKLEKEPKTRPEENKPERPSGRKPRPMGIIAANVEKHYETGRVIGDGNFAVVKECRHRETRQAYAMKIIDKSRLKGKEDMVDSEILIIQSLSHPNIVKLHEVYETDMEIYLILEYVQGGDLFDAIIESVKFPEPDAALMIMDLCKALVHMHDKSIVHRDLKPENLLVQRNEDKSTTLKLADFGLAKHVVRPIFTVCGTPTYVAPEILSEKGYGLEVDMWAAGVILYILLCGFPPFRSPERDQDELFNIIQLGHFEFLPPYWDNISDAAKDLVSRLLVVDPKKRYTAHQVLQHPWIETAGKTNTVKRQKQVSPSSEGHFRSQHKRVVEQVS.

Disordered regions lie at residues 86-127 and 150-345; these read DDRA…HLGV and QSLE…PRPM. 5 stretches are compositionally biased toward basic and acidic residues: residues 98-127, 213-234, 255-266, 277-303, and 312-338; these read GKWE…HLGV, ELRR…DQES, EGLREVKKDTRP, LREH…EKKP, and TLRD…ERPS. Positions 356-613 constitute a Protein kinase domain; the sequence is YETGRVIGDG…AHQVLQHPWI (258 aa). ATP-binding positions include 362–370 and K385; that span reads IGDGNFAVV. Residue D477 is the Proton acceptor of the active site. Positions 628–648 are disordered; that stretch reads VSPSSEGHFRSQHKRVVEQVS.

The protein belongs to the protein kinase superfamily. CAMK Ser/Thr protein kinase family. CaMK subfamily.

Its subcellular location is the cytoplasm. The protein resides in the nucleus. The enzyme catalyses L-seryl-[protein] + ATP = O-phospho-L-seryl-[protein] + ADP + H(+). The catalysed reaction is L-threonyl-[protein] + ATP = O-phospho-L-threonyl-[protein] + ADP + H(+). The polypeptide is Serine/threonine-protein kinase DCLK3 (DCLK3) (Homo sapiens (Human)).